We begin with the raw amino-acid sequence, 145 residues long: Ribonuclease H (145 aa).

Positions 2–143 constitute an RNase H type-1 domain; sequence SKKEVIIYTD…ADSLARKAII (142 aa). 4 residues coordinate Mg(2+): Asp-11, Glu-49, Asp-71, and Asp-135.

This sequence belongs to the RNase H family. In terms of assembly, monomer. Mg(2+) is required as a cofactor.

The protein localises to the cytoplasm. The catalysed reaction is Endonucleolytic cleavage to 5'-phosphomonoester.. Endonuclease that specifically degrades the RNA of RNA-DNA hybrids. This Wolbachia pipientis wMel protein is Ribonuclease H.